The chain runs to 480 residues: MNVGRTVKVTQAVVDLKFEGELPRIFNALKSKLEYRGKELILEVSQHIGDNIVRCIAMDSTNGVSRNDEFVDTGAPISVPVGRSTLGRIFNVVGEVIDECGPLKGKYDLESIHRVPPSFTEQKIQEEVLVTGIKVIDLLAPYLKGGKIGLFGGAGVGKTVLIMELINNIAKAHKGFSVFAGVGERTREGNDLYHEMITSNVINVNEHEKSQAVLVYGQMNEPPGARARVALTALTMAEYFRDHENQDVLFFVDNIFRFTQAGSEISALLGRMPSAVGYQPTLATDMGAMQERIASTTSGSITSVQAIYVPADDLTDPAPAATFSHLDSTTVLSRQIAEMGIYPAVDPLDSTSQSLSAEIVGEEHYKVTSEVKRILQTYKSLQDIIAILGMDELSDEDKITVDRARKIQKFFSQPFHVAEVFTGMPGKFVSLSDTVSSFKGIVEGEYDHLPEAAFYMVGNIDEAIKKAELIKDETKVGAKS.

Position 152–159 (152–159 (GGAGVGKT)) interacts with ATP.

It belongs to the ATPase alpha/beta chains family. F-type ATPases have 2 components, CF(1) - the catalytic core - and CF(0) - the membrane proton channel. CF(1) has five subunits: alpha(3), beta(3), gamma(1), delta(1), epsilon(1). CF(0) has three main subunits: a(1), b(2) and c(9-12). The alpha and beta chains form an alternating ring which encloses part of the gamma chain. CF(1) is attached to CF(0) by a central stalk formed by the gamma and epsilon chains, while a peripheral stalk is formed by the delta and b chains.

Its subcellular location is the cell membrane. It carries out the reaction ATP + H2O + 4 H(+)(in) = ADP + phosphate + 5 H(+)(out). Its function is as follows. Produces ATP from ADP in the presence of a proton gradient across the membrane. The catalytic sites are hosted primarily by the beta subunits. The protein is ATP synthase subunit beta of Wolbachia sp. subsp. Brugia malayi (strain TRS).